The chain runs to 202 residues: Small ribosomal subunit protein uS4 (202 aa).

The tract at residues 22–43 is disordered; sequence TRKSARRAYPPGQHGQNRRKRS. The 63-residue stretch at 90–152 folds into the S4 RNA-binding domain; it reads MRLDNTVFRL…EKSKEMVKTN (63 aa).

The protein belongs to the universal ribosomal protein uS4 family. In terms of assembly, part of the 30S ribosomal subunit. Contacts protein S5. The interaction surface between S4 and S5 is involved in control of translational fidelity.

In terms of biological role, one of the primary rRNA binding proteins, it binds directly to 16S rRNA where it nucleates assembly of the body of the 30S subunit. With S5 and S12 plays an important role in translational accuracy. This is Small ribosomal subunit protein uS4 from Trichodesmium erythraeum (strain IMS101).